The following is a 308-amino-acid chain: Putative S-adenosyl-L-methionine-dependent methyltransferase Mjls_1073 (308 aa).

S-adenosyl-L-methionine contacts are provided by residues D133 and 162 to 163 (DL).

It belongs to the UPF0677 family.

Exhibits S-adenosyl-L-methionine-dependent methyltransferase activity. This Mycobacterium sp. (strain JLS) protein is Putative S-adenosyl-L-methionine-dependent methyltransferase Mjls_1073.